Reading from the N-terminus, the 360-residue chain is Peptide chain release factor 1 (360 aa).

Glutamine 235 carries the N5-methylglutamine modification. The segment at 285 to 314 (KRQQAEASTRRNLLGSGDRSDRNRTYNFPQ) is disordered.

It belongs to the prokaryotic/mitochondrial release factor family. In terms of processing, methylated by PrmC. Methylation increases the termination efficiency of RF1.

The protein resides in the cytoplasm. Functionally, peptide chain release factor 1 directs the termination of translation in response to the peptide chain termination codons UAG and UAA. This is Peptide chain release factor 1 from Klebsiella pneumoniae subsp. pneumoniae (strain ATCC 700721 / MGH 78578).